The sequence spans 307 residues: 4-hydroxythreonine-4-phosphate dehydrogenase (307 aa).

2 residues coordinate substrate: H126 and T127. A divalent metal cation-binding residues include H156, H195, and H251. Substrate contacts are provided by K259, N268, and R277.

This sequence belongs to the PdxA family. Homodimer. It depends on Zn(2+) as a cofactor. Requires Mg(2+) as cofactor. The cofactor is Co(2+).

The protein resides in the cytoplasm. The enzyme catalyses 4-(phosphooxy)-L-threonine + NAD(+) = 3-amino-2-oxopropyl phosphate + CO2 + NADH. The protein operates within cofactor biosynthesis; pyridoxine 5'-phosphate biosynthesis; pyridoxine 5'-phosphate from D-erythrose 4-phosphate: step 4/5. Its function is as follows. Catalyzes the NAD(P)-dependent oxidation of 4-(phosphooxy)-L-threonine (HTP) into 2-amino-3-oxo-4-(phosphooxy)butyric acid which spontaneously decarboxylates to form 3-amino-2-oxopropyl phosphate (AHAP). This is 4-hydroxythreonine-4-phosphate dehydrogenase from Helicobacter pylori (strain Shi470).